Reading from the N-terminus, the 459-residue chain is tRNA modification GTPase MnmE (459 aa).

(6S)-5-formyl-5,6,7,8-tetrahydrofolate contacts are provided by arginine 20, glutamate 85, and arginine 124. Residues 221 to 380 form the TrmE-type G domain; that stretch reads GLSTVIIGRP…LEEAIQSLFY (160 aa). K(+) is bound at residue asparagine 231. Residues 231–236, 250–256, and 275–278 each bind GTP; these read NVGKSS, TDIPGTT, and DTAG. Serine 235 lines the Mg(2+) pocket. K(+) contacts are provided by threonine 250, isoleucine 252, and threonine 255. Threonine 256 is a Mg(2+) binding site. Lysine 459 serves as a coordination point for (6S)-5-formyl-5,6,7,8-tetrahydrofolate.

This sequence belongs to the TRAFAC class TrmE-Era-EngA-EngB-Septin-like GTPase superfamily. TrmE GTPase family. In terms of assembly, homodimer. Heterotetramer of two MnmE and two MnmG subunits. It depends on K(+) as a cofactor.

The protein resides in the cytoplasm. Functionally, exhibits a very high intrinsic GTPase hydrolysis rate. Involved in the addition of a carboxymethylaminomethyl (cmnm) group at the wobble position (U34) of certain tRNAs, forming tRNA-cmnm(5)s(2)U34. The chain is tRNA modification GTPase MnmE from Bacillus subtilis (strain 168).